A 312-amino-acid polypeptide reads, in one-letter code: Isoflavone reductase homolog (312 aa).

NADP(+) is bound by residues 10–16 (GGTGYVG), Arg-35, and Lys-44. The active-site Proton acceptor is Lys-138. Arg-142 provides a ligand contact to NADP(+). His-270 lines the substrate pocket.

The protein belongs to the NmrA-type oxidoreductase family. Isoflavone reductase subfamily.

The polypeptide is Isoflavone reductase homolog (Lupinus albus (White lupine)).